The primary structure comprises 78 residues: Ferredoxin (78 aa).

4Fe-4S ferredoxin-type domains lie at phenylalanine 2–proline 29 and aspartate 30–phenylalanine 59. [3Fe-4S] cluster contacts are provided by cysteine 8 and cysteine 16. Cysteine 20, cysteine 39, cysteine 42, and cysteine 45 together coordinate [4Fe-4S] cluster. Cysteine 49 contacts [3Fe-4S] cluster.

It depends on [3Fe-4S] cluster as a cofactor. Requires [4Fe-4S] cluster as cofactor.

In terms of biological role, ferredoxins are iron-sulfur proteins that transfer electrons in a wide variety of metabolic reactions. This chain is Ferredoxin, found in Alicyclobacillus acidocaldarius subsp. acidocaldarius (Bacillus acidocaldarius).